Reading from the N-terminus, the 531-residue chain is PHD finger protein 21B (531 aa).

Disordered regions lie at residues 79-99 (PDSLPVAPGRDRPPKQPPTFQ), 184-222 (SADNKPPPRLLSSPHPATHHCPLHPSSLPLTPPSPSLSP), 238-277 (VQTQPESTAESRPPTEEPSQGAQATKKKKEDRPPTQENPE), and 295-314 (EIQSKRQERKRRSTANPAYS). Over residues 265 to 277 (KKEDRPPTQENPE) the composition is skewed to basic and acidic residues. The PHD-type zinc-finger motif lies at 352–399 (DEHCAACKRGANLQPCGTCPGAYHLSCLEPPLKTAPKGVWVCPRCQQK). Residues 423–465 (KTVKEEEKQKLLQRGSELQNEHQQLEERDRRLASAVQKCLELK) are a coiled coil. The interval 507–531 (LLAGPWTKPSVAATHPTVQHPQGHN) is disordered. Polar residues predominate over residues 522–531 (PTVQHPQGHN).

The chain is PHD finger protein 21B (PHF21B) from Homo sapiens (Human).